A 170-amino-acid polypeptide reads, in one-letter code: Photosystem I assembly protein Ycf3 (170 aa).

TPR repeat units follow at residues Ala35 to Pro68, Ser72 to Leu105, and Gly120 to Asn153.

The protein belongs to the Ycf3 family.

It is found in the plastid. The protein localises to the chloroplast thylakoid membrane. In terms of biological role, essential for the assembly of the photosystem I (PSI) complex. May act as a chaperone-like factor to guide the assembly of the PSI subunits. This chain is Photosystem I assembly protein Ycf3, found in Saccharum officinarum (Sugarcane).